We begin with the raw amino-acid sequence, 911 residues long: Disks large homolog 1 (911 aa).

Residues 4–64 (RKQDTQRALH…FYEVTLLDNP (61 aa)) enclose the L27 domain. Serine 39 is modified (phosphoserine; by CaMK2). Residues 70 to 105 (SKQCEPVQPGNPWESGSLSSAAVTSESLPGGLSPPV) form a disordered region. The span at 83-96 (ESGSLSSAAVTSES) shows a compositional bias: polar residues. Phosphoserine occurs at positions 122, 138, and 158. Residues 162-212 (PTEAVPPSSPIVPVTPALPVPAESPVVLPSTPQANPPPVLVNTDSLETPTY) form an interaction with SH3 domains region. 2 consecutive PDZ domains span residues 224–310 (EITL…VKRR) and 318–404 (EIKL…AAKP). The tract at residues 224–545 (EITLERGNSG…QAVTIVAQYR (322 aa)) is required for interaction with MARCHF2. Serine 232 carries the phosphoserine; by CaMK2 modification. Tyrosine 398 bears the Phosphotyrosine mark. A compositionally biased stretch (polar residues) spans 419–441 (TNSSSQSVDNHVSPSSYLGQTPA). Positions 419–443 (TNSSSQSVDNHVSPSSYLGQTPASP) are disordered. The 81-residue stretch at 465–545 (KVVLHRGSTG…QAVTIVAQYR (81 aa)) folds into the PDZ 3 domain. Phosphoserine is present on residues serine 567, serine 572, serine 574, serine 578, serine 597, serine 618, serine 684, serine 687, and serine 841. Positions 580–650 (KRSLYVRALF…PSKRRVEKKE (71 aa)) constitute an SH3 domain. A disordered region spans residues 662–696 (KTRGDKGEIPDDMGSKGLKHVTSNASDSESSYHEY). Residues 721–896 (TRPVIILGPM…IYNQVKQIIE (176 aa)) form the Guanylate kinase-like domain.

This sequence belongs to the MAGUK family. In terms of assembly, homotetramer. Interacts (via guanylate kinase-like domain) with DLGAP1, DLGAP2, DLGAP3, DLGAP4 and MAP1A. Interacts (via guanylate kinase-like domain) with KIF13B. May interact with HTR2A. Interacts (via PDZ domains) with GRIA1. Interacts (via PDZ domains) with GRIN2A. Interacts (via PDZ domains) with KCND2 and KCND3. Interacts (via PDZ domains) with KCNA1, KCNA2, KCNA3 and KCNA4. Interacts (via PDZ domains) with ADGRA3. Interacts with KCNF1. Interacts with CAMK2. Interacts with cytoskeleton-associated protein EPB41. Interacts with cytoskeleton-associated protein EZR. Found in a complex with KCNA5 and CAV3. Found in a complex with APC and CTNNB1. Interacts (via PDZ domains) with APC. Interacts with CDH1 through binding to PIK3R1. Forms multiprotein complexes with CASK, LIN7A, LIN7B, LIN7C, APBA1, and KCNJ12. Interacts with TOPK. Forms a tripartite complex composed of DLG1, MPP7 and LIN7 (LIN7A or LIN7C). May interact with TJAP1. Interacts with PTEN. Interacts with FRMPD4 (via C-terminus). Interacts with LRFN1 and LRFN2. Interacts with LRFN4 and SFPQ. Interacts (via PDZ domains) with ADGRA2 (via PDZ-binding motif). Interacts with ADAM10; this interaction recruits ADAM10 to the cell membrane during long-term depression in hippocampal neurons. Interacts with DGKI (via PDZ-binding motif). Interacts (via PDZ domains) with MARCHF2 (via PDZ domain); the interaction leads to DLG1 ubiqtuitination and degradation. Interacts (via N-terminus) with MPP3; this interaction connects CADM1 with DLG1 and links CADM1 with the regulatory subunit of phosphoinositide-3-kinase (PI3K) by forming a multiprotein complex and participates in cell spreading. Post-translationally, phosphorylated by MAPK12. Phosphorylation of Ser-39 modulates transport to the plasma membrane. Phosphorylation of Ser-232 regulates association with GRIN2A. Ubiquitinated; by MARCHF2 which results in its degradation. As to expression, widely expressed. Strongly expressed in epithelial cells, in the small intestine it is only detected in the vili. Expressed in brain, heart (at protein level), muscle, lung and liver. In the brain it was detected in olfactory bulbs, cerebral cortex, hippocampus, and spinal cord (at protein level).

It localises to the cell membrane. The protein localises to the basolateral cell membrane. Its subcellular location is the endoplasmic reticulum membrane. The protein resides in the postsynaptic density. It is found in the synapse. It localises to the sarcolemma. The protein localises to the cell junction. Its subcellular location is the cytoplasm. The protein resides in the apical cell membrane. Functionally, essential multidomain scaffolding protein required for normal development. Recruits channels, receptors and signaling molecules to discrete plasma membrane domains in polarized cells. Promotes epithelial cell layer barrier function via maintaining cell-cell adhesion. May play a role in adherens junction assembly, signal transduction, cell proliferation, synaptogenesis and lymphocyte activation. Regulates the excitability of cardiac myocytes by modulating the functional expression of Kv4 channels. Functional regulator of Kv1.5 channel. During long-term depression in hippocampal neurons, it recruits ADAM10 to the plasma membrane. This is Disks large homolog 1 from Rattus norvegicus (Rat).